Here is a 458-residue protein sequence, read N- to C-terminus: Probable alpha-L-glutamate ligase (458 aa).

The unknown stretch occupies residues 1 to 162; it reads MSDNKFIIGS…YGVKTAKKSG (162 aa). The tract at residues 163–458 is alpha-L-glutamate ligase; it reads LKIGLLASNP…IEKKLGWKAD (296 aa). An ATP-grasp domain is found at 267–450; the sequence is LQLLQKNNLD…IAGAMIESIE (184 aa). ATP-binding positions include K304, 341–342, D350, and 374–376; these read EF and RAN. 3 residues coordinate Mg(2+): D411, E423, and N425. Residues D411, E423, and N425 each coordinate Mn(2+).

It in the C-terminal section; belongs to the RimK family. Mg(2+) is required as a cofactor. Requires Mn(2+) as cofactor.

This Shewanella pealeana (strain ATCC 700345 / ANG-SQ1) protein is Probable alpha-L-glutamate ligase.